The chain runs to 579 residues: Carboxysome shell carbonic anhydrase (579 aa).

The tract at residues 72–95 is disordered; it reads GGGRVRSARDQRQPGWVRRDKGAT. Residues 78-93 are compositionally biased toward basic and acidic residues; that stretch reads SARDQRQPGWVRRDKG. C240 provides a ligand contact to Zn(2+). D242 functions as the Proton acceptor in the catalytic mechanism. Zn(2+)-binding residues include H308 and C319.

It belongs to the beta-class carbonic anhydrase family. CsoSCA subfamily. As to quaternary structure, homodimer. It depends on Zn(2+) as a cofactor.

It localises to the carboxysome. It carries out the reaction hydrogencarbonate + H(+) = CO2 + H2O. With respect to regulation, inhibited by dithiothreitol, partially inhibited by acetatzolamide and cyanide. In terms of biological role, reversible hydration of carbon dioxide. Essential for photosynthetic carbon dioxide fixation, supplies CO(2) to RuBisCO (ribulose bisphosphate carboxylase, cbbL-cbbS) in the carboxysome. This Parasynechococcus marenigrum (strain WH8102) protein is Carboxysome shell carbonic anhydrase.